The sequence spans 617 residues: Mitochondrial Rho GTPase 2 (617 aa).

Residues 1–590 lie on the Cytoplasmic side of the membrane; sequence MKRDVRILLL…LNGSDMSSTS (590 aa). The 167-residue stretch at 2 to 168 folds into the Miro 1 domain; the sequence is KRDVRILLLG…FYYAQKAVLH (167 aa). Positions 16, 17, 18, and 19 each coordinate GTP. Position 18 (Thr18) interacts with Mg(2+). Asp57 contacts Mg(2+). Residues Ser59, Asn118, Lys119, Asp121, Ala149, and Lys150 each coordinate GTP. EF-hand domains follow at residues 184-219 and 304-339; these read QCVR…CFGN and LGHQ…LPYM. Residues Asp197, Asp199, Asp201, Glu208, Asp317, Asp319, Asp321, and Glu328 each contribute to the Ca(2+) site. The Miro 2 domain occupies 416-578; sequence RTVFLCKVIG…YSKLTWAAMY (163 aa). GTP contacts are provided by Gly428, Gly430, Lys431, and Thr432. Mg(2+) is bound by residues Thr432 and Glu474. Lys528 and Asp530 together coordinate GTP. The chain crosses the membrane as a helical; Anchor for type IV membrane protein span at residues 591–613; the sequence is FWLRVTLGATIAAMLGFALYRAF. The Mitochondrial intermembrane segment spans residues 614-617; it reads SRHK.

The protein belongs to the mitochondrial Rho GTPase family. Homodimer.

The protein resides in the mitochondrion outer membrane. It catalyses the reaction GTP + H2O = GDP + phosphate + H(+). The catalysed reaction is ATP + H2O = ADP + phosphate + H(+). It carries out the reaction UTP + H2O = UDP + phosphate + H(+). Its function is as follows. Atypical mitochondrial nucleoside-triphosphatase (NTPase) involved in mitochondrial trafficking. Probably involved in control of anterograde transport of mitochondria and their subcellular distribution. Can hydrolyze GTP, ATP and UTP. This Danio rerio (Zebrafish) protein is Mitochondrial Rho GTPase 2 (rhot2).